Reading from the N-terminus, the 314-residue chain is tRNA dimethylallyltransferase (314 aa).

12-19 (GPTGTGKS) lines the ATP pocket. 14–19 (TGTGKS) lines the substrate pocket.

It belongs to the IPP transferase family. In terms of assembly, monomer. The cofactor is Mg(2+).

The enzyme catalyses adenosine(37) in tRNA + dimethylallyl diphosphate = N(6)-dimethylallyladenosine(37) in tRNA + diphosphate. Catalyzes the transfer of a dimethylallyl group onto the adenine at position 37 in tRNAs that read codons beginning with uridine, leading to the formation of N6-(dimethylallyl)adenosine (i(6)A). The polypeptide is tRNA dimethylallyltransferase (Mycolicibacterium paratuberculosis (strain ATCC BAA-968 / K-10) (Mycobacterium paratuberculosis)).